A 364-amino-acid chain; its full sequence is Putative methylthioribose-1-phosphate isomerase (364 aa).

Substrate contacts are provided by residues 57–59 (RGA), Arg-100, and Gln-206. The Proton donor role is filled by Asp-247. 257–258 (NK) contributes to the substrate binding site.

This sequence belongs to the eIF-2B alpha/beta/delta subunits family. MtnA subfamily.

It catalyses the reaction 5-(methylsulfanyl)-alpha-D-ribose 1-phosphate = 5-(methylsulfanyl)-D-ribulose 1-phosphate. Catalyzes the interconversion of methylthioribose-1-phosphate (MTR-1-P) into methylthioribulose-1-phosphate (MTRu-1-P). This is Putative methylthioribose-1-phosphate isomerase from Pyrococcus horikoshii (strain ATCC 700860 / DSM 12428 / JCM 9974 / NBRC 100139 / OT-3).